Reading from the N-terminus, the 70-residue chain is MSCSCGSSCGCGSNCKCGKMYPDLDEQASTTTQAVVVVGVAHENKAGQFEMASGEGCKCGANCKCDPCNC.

The protein belongs to the metallothionein superfamily. Type 15 family.

Its function is as follows. Metallothioneins have a high content of cysteine residues that bind various heavy metals. The protein is Metallothionein-like protein 1 (MT1) of Festuca rubra (Red fescue).